A 104-amino-acid chain; its full sequence is Pyrimidine/purine nucleoside phosphorylase (104 aa).

Belongs to the nucleoside phosphorylase PpnP family.

It catalyses the reaction a purine D-ribonucleoside + phosphate = a purine nucleobase + alpha-D-ribose 1-phosphate. The catalysed reaction is adenosine + phosphate = alpha-D-ribose 1-phosphate + adenine. It carries out the reaction cytidine + phosphate = cytosine + alpha-D-ribose 1-phosphate. The enzyme catalyses guanosine + phosphate = alpha-D-ribose 1-phosphate + guanine. It catalyses the reaction inosine + phosphate = alpha-D-ribose 1-phosphate + hypoxanthine. The catalysed reaction is thymidine + phosphate = 2-deoxy-alpha-D-ribose 1-phosphate + thymine. It carries out the reaction uridine + phosphate = alpha-D-ribose 1-phosphate + uracil. The enzyme catalyses xanthosine + phosphate = alpha-D-ribose 1-phosphate + xanthine. Functionally, catalyzes the phosphorolysis of diverse nucleosides, yielding D-ribose 1-phosphate and the respective free bases. Can use uridine, adenosine, guanosine, cytidine, thymidine, inosine and xanthosine as substrates. Also catalyzes the reverse reactions. In Geobacter sulfurreducens (strain ATCC 51573 / DSM 12127 / PCA), this protein is Pyrimidine/purine nucleoside phosphorylase.